Here is a 669-residue protein sequence, read N- to C-terminus: DNA ligase (669 aa).

NAD(+) contacts are provided by residues 34 to 38, 83 to 84, and Glu-114; these read DAEYD and SL. Catalysis depends on Lys-116, which acts as the N6-AMP-lysine intermediate. NAD(+) is bound by residues Arg-137, Glu-171, Lys-287, and Lys-311. Positions 405, 408, 423, and 428 each coordinate Zn(2+). In terms of domain architecture, BRCT spans 591–669; it reads NVESYFAGKT…EERFLQELNK (79 aa).

This sequence belongs to the NAD-dependent DNA ligase family. LigA subfamily. The cofactor is Mg(2+). Requires Mn(2+) as cofactor.

It catalyses the reaction NAD(+) + (deoxyribonucleotide)n-3'-hydroxyl + 5'-phospho-(deoxyribonucleotide)m = (deoxyribonucleotide)n+m + AMP + beta-nicotinamide D-nucleotide.. Functionally, DNA ligase that catalyzes the formation of phosphodiester linkages between 5'-phosphoryl and 3'-hydroxyl groups in double-stranded DNA using NAD as a coenzyme and as the energy source for the reaction. It is essential for DNA replication and repair of damaged DNA. In Bacillus cereus (strain AH820), this protein is DNA ligase.